We begin with the raw amino-acid sequence, 659 residues long: Replication protein E1 (659 aa).

The interval 30 to 57 is disordered; that stretch reads RTGDTVSSDEDEEEDGGEDLVDFIDDRP. A compositionally biased stretch (acidic residues) spans 36-52; sequence SSDEDEEEDGGEDLVDF. A Nuclear localization signal motif is present at residues 85-87; the sequence is KRK. Residues serine 91, serine 95, serine 108, and serine 121 each carry the phosphoserine; by host modification. The short motif at 107 to 116 is the Nuclear export signal element; that stretch reads LSPRLDAIKL. The disordered stretch occupies residues 134-195; it reads GYGQTQVDTE…DGEESQTESV (62 aa). The span at 135–160 shows a compositional bias: polar residues; it reads YGQTQVDTESGPKQVQDICKTSQQDG. The DNA-binding region stretch occupies residues 196–362; sequence QTDTTACGVL…QTVVGHALEE (167 aa). Positions 461 to 611 constitute an SF3 helicase domain; sequence VEFIPFLCAL…FPLTTQGEPL (151 aa). 487-494 is an ATP binding site; that stretch reads GPADTGKS. A Glycyl lysine isopeptide (Lys-Gly) (interchain with G-Cter in SUMO) cross-link involves residue lysine 568. The segment at 634–659 is disordered; the sequence is DPEDEEDNGNTSEPFRCVPGQNTRTV.

Belongs to the papillomaviridae E1 protein family. As to quaternary structure, can form hexamers. Interacts with E2 protein; this interaction increases E1 DNA binding specificity. Interacts with host DNA polymerase subunit POLA2. Interacts with host single stranded DNA-binding protein RPA1. Interacts with host TOP1; this interaction stimulates the enzymatic activity of TOP1. Phosphorylated. In terms of processing, sumoylated.

The protein resides in the host nucleus. The enzyme catalyses Couples ATP hydrolysis with the unwinding of duplex DNA by translocating in the 3'-5' direction.. It carries out the reaction ATP + H2O = ADP + phosphate + H(+). Functionally, ATP-dependent DNA 3'-5' helicase required for initiation of viral DNA replication. It forms a complex with the viral E2 protein. The E1-E2 complex binds to the replication origin which contains binding sites for both proteins. During the initial step, a dimer of E1 interacts with a dimer of protein E2 leading to a complex that binds the viral origin of replication with high specificity. Then, a second dimer of E1 displaces the E2 dimer in an ATP-dependent manner to form the E1 tetramer. Following this, two E1 monomers are added to each half of the site, which results in the formation of two E1 trimers on the viral ori. Subsequently, two hexamers will be created. The double hexamer acts as a bi-directional helicase machinery and unwinds the viral DNA and then recruits the host DNA polymerase to start replication. The chain is Replication protein E1 from Homo sapiens (Human).